The chain runs to 399 residues: Enolase (399 aa).

Q152 contributes to the (2R)-2-phosphoglycerate binding site. E194 acts as the Proton donor in catalysis. Mg(2+) contacts are provided by D230, E273, and D301. (2R)-2-phosphoglycerate is bound by residues K326, R355, S356, and K377. Catalysis depends on K326, which acts as the Proton acceptor.

It belongs to the enolase family. Requires Mg(2+) as cofactor.

It localises to the cytoplasm. Its subcellular location is the secreted. It is found in the cell surface. The catalysed reaction is (2R)-2-phosphoglycerate = phosphoenolpyruvate + H2O. It participates in carbohydrate degradation; glycolysis; pyruvate from D-glyceraldehyde 3-phosphate: step 4/5. In terms of biological role, catalyzes the reversible conversion of 2-phosphoglycerate (2-PG) into phosphoenolpyruvate (PEP). It is essential for the degradation of carbohydrates via glycolysis. The polypeptide is Enolase (Methanocorpusculum labreanum (strain ATCC 43576 / DSM 4855 / Z)).